The chain runs to 461 residues: Fumarate hydratase class II (461 aa).

Residues 97–99 (SGT), 127–130 (HPND), 137–139 (SSN), and Thr-185 each bind substrate. Catalysis depends on His-186, which acts as the Proton donor/acceptor. Ser-316 is a catalytic residue. Residues Ser-317 and 322 to 324 (KVN) each bind substrate.

The protein belongs to the class-II fumarase/aspartase family. Fumarase subfamily. As to quaternary structure, homotetramer.

The protein localises to the cytoplasm. The catalysed reaction is (S)-malate = fumarate + H2O. It participates in carbohydrate metabolism; tricarboxylic acid cycle; (S)-malate from fumarate: step 1/1. Involved in the TCA cycle. Catalyzes the stereospecific interconversion of fumarate to L-malate. This Staphylococcus aureus (strain MSSA476) protein is Fumarate hydratase class II.